We begin with the raw amino-acid sequence, 139 residues long: Endoribonuclease YbeY (139 aa).

Residues H105, H109, and D115 each coordinate Zn(2+).

Belongs to the endoribonuclease YbeY family. The cofactor is Zn(2+).

It is found in the cytoplasm. Its function is as follows. Single strand-specific metallo-endoribonuclease involved in late-stage 70S ribosome quality control and in maturation of the 3' terminus of the 16S rRNA. In Flavobacterium johnsoniae (strain ATCC 17061 / DSM 2064 / JCM 8514 / BCRC 14874 / CCUG 350202 / NBRC 14942 / NCIMB 11054 / UW101) (Cytophaga johnsonae), this protein is Endoribonuclease YbeY.